A 498-amino-acid polypeptide reads, in one-letter code: Guanosine-5'-triphosphate,3'-diphosphate pyrophosphatase (498 aa).

Belongs to the GppA/Ppx family. GppA subfamily.

The enzyme catalyses guanosine 3'-diphosphate 5'-triphosphate + H2O = guanosine 3',5'-bis(diphosphate) + phosphate + H(+). Its pathway is purine metabolism; ppGpp biosynthesis; ppGpp from GTP: step 2/2. In terms of biological role, catalyzes the conversion of pppGpp to ppGpp. Guanosine pentaphosphate (pppGpp) is a cytoplasmic signaling molecule which together with ppGpp controls the 'stringent response', an adaptive process that allows bacteria to respond to amino acid starvation, resulting in the coordinated regulation of numerous cellular activities. In Pectobacterium atrosepticum (strain SCRI 1043 / ATCC BAA-672) (Erwinia carotovora subsp. atroseptica), this protein is Guanosine-5'-triphosphate,3'-diphosphate pyrophosphatase.